The following is a 183-amino-acid chain: MSIFSRLKKVVAGDDYLDDDYGTELEYEDGLEPSDSTLDRGGAIAPIGSFDDGDPFASSNVIGMPGITSAAAEVLVMEPRSFDEMPKTIQALRERKTIILNLTMMEPDQAQRAVDFVAGGTYAIDGHQERVGESIFLFAPSCVTVTTASSEESAAPSVMAREEEATAPAAPSPAWGTQDAING.

Residues Ser-149–Gly-183 form a disordered region.

This sequence belongs to the SepF family. As to quaternary structure, homodimer. Interacts with FtsZ.

The protein resides in the cytoplasm. In terms of biological role, cell division protein that is part of the divisome complex and is recruited early to the Z-ring. Probably stimulates Z-ring formation, perhaps through the cross-linking of FtsZ protofilaments. Its function overlaps with FtsA. In Synechococcus sp. (strain RCC307), this protein is Cell division protein SepF.